A 755-amino-acid chain; its full sequence is 1,4-alpha-glucan branching enzyme GlgB (755 aa).

The Nucleophile role is filled by Asp435. Glu488 serves as the catalytic Proton donor.

The protein belongs to the glycosyl hydrolase 13 family. GlgB subfamily. As to quaternary structure, monomer.

It catalyses the reaction Transfers a segment of a (1-&gt;4)-alpha-D-glucan chain to a primary hydroxy group in a similar glucan chain.. It functions in the pathway glycan biosynthesis; glycogen biosynthesis. In terms of biological role, catalyzes the formation of the alpha-1,6-glucosidic linkages in glycogen by scission of a 1,4-alpha-linked oligosaccharide from growing alpha-1,4-glucan chains and the subsequent attachment of the oligosaccharide to the alpha-1,6 position. This Vibrio parahaemolyticus serotype O3:K6 (strain RIMD 2210633) protein is 1,4-alpha-glucan branching enzyme GlgB.